Reading from the N-terminus, the 95-residue chain is Small ribosomal subunit protein bS6 (95 aa).

This sequence belongs to the bacterial ribosomal protein bS6 family.

Functionally, binds together with bS18 to 16S ribosomal RNA. In Streptococcus agalactiae serotype Ia (strain ATCC 27591 / A909 / CDC SS700), this protein is Small ribosomal subunit protein bS6.